Consider the following 393-residue polypeptide: Putative N(4)-(beta-N-acetylglucosaminyl)-L-asparaginase GM21137 (393 aa).

A signal peptide spans 1-23 (MRTHLRASLWVLCLASTAFSILA). 2 disulfides stabilise this stretch: Cys97–Cys102 and Cys196–Cys212. The active-site Nucleophile is the Thr243. Substrate contacts are provided by residues 271–274 (RVGD) and 294–297 (TGDG). A disulfide bond links Cys354 and Cys381.

This sequence belongs to the Ntn-hydrolase family. In terms of assembly, heterotetramer of two alpha and two beta chains arranged as a dimer of alpha/beta heterodimers. Cleaved into an alpha and beta chain by autocatalysis; this activates the enzyme. The N-terminal residue of the beta subunit is responsible for the nucleophile hydrolase activity.

The enzyme catalyses N(4)-(beta-N-acetyl-D-glucosaminyl)-L-asparagine + H2O = N-acetyl-beta-D-glucosaminylamine + L-aspartate + H(+). In terms of biological role, cleaves the GlcNAc-Asn bond which joins oligosaccharides to the peptide of asparagine-linked glycoproteins. This is Putative N(4)-(beta-N-acetylglucosaminyl)-L-asparaginase GM21137 from Drosophila sechellia (Fruit fly).